The sequence spans 263 residues: MNPGQDREKIVNIEERIPKIKEQRKQKANRRLISFIMLFFIMVLIIVYLQTPISKVSTISVTGNENVSKKEIIDLSDINSGDTEFWSLDKQKTEKKIQQNKLVKKAEISKSLPNKINIAIEEYKAIAYLEKDDVYYEVLENGSVLPNEVTPDDAGPILVNWTNAKKRSQMAKQLDALSNSLKQSISEIYYTPVKMDENRIKLYMNDGYVVTASIKTFADRMKTYPSIISQLSSNKKGIIHLEVATYFEEFGKNDKAAKKEDEN.

Topologically, residues 1–32 (MNPGQDREKIVNIEERIPKIKEQRKQKANRRL) are cytoplasmic. The chain crosses the membrane as a helical span at residues 33-53 (ISFIMLFFIMVLIIVYLQTPI). An alpha region spans residues 51-123 (TPISKVSTIS…NKINIAIEEY (73 aa)). The 70-residue stretch at 54 to 123 (SKVSTISVTG…NKINIAIEEY (70 aa)) folds into the POTRA domain. Residues 54-263 (SKVSTISVTG…DKAAKKEDEN (210 aa)) lie on the Extracellular side of the membrane. The tract at residues 124 to 251 (KAIAYLEKDD…EVATYFEEFG (128 aa)) is beta. A gamma region spans residues 229–263 (SQLSSNKKGIIHLEVATYFEEFGKNDKAAKKEDEN).

The protein belongs to the FtsQ/DivIB family. DivIB subfamily. In terms of assembly, interacts with FtsL, DivIC and PBP-2B.

It is found in the cell membrane. In terms of biological role, cell division protein that may be involved in stabilizing or promoting the assembly of the division complex. Plays an essential role in division at high temperatures, maybe by protecting FtsL from degradation or by promoting formation of the FtsL-DivIC complex. May modulate the transpeptidase activity of PBP-2B. Also required for efficient sporulation at all temperatures. Could be directly involved in the engulfment process or be required to form a sporulation septum competent for engulfment. Influences the Spo0J/Soj system of chromosome segregation. The polypeptide is Cell division protein DivIB (Bacillus subtilis (strain 168)).